The following is a 405-amino-acid chain: Cytoplasmic tRNA 2-thiolation protein 2 (405 aa).

The protein belongs to the CTU2/NCS2 family.

It is found in the cytoplasm. It functions in the pathway tRNA modification; 5-methoxycarbonylmethyl-2-thiouridine-tRNA biosynthesis. Plays a central role in 2-thiolation of mcm(5)S(2)U at tRNA wobble positions of tRNA(Lys), tRNA(Glu) and tRNA(Gln). May act by forming a heterodimer with NCS6/CTU1 that ligates sulfur from thiocarboxylated URM1 onto the uridine of tRNAs at wobble position. The sequence is that of Cytoplasmic tRNA 2-thiolation protein 2 from Drosophila persimilis (Fruit fly).